Reading from the N-terminus, the 148-residue chain is Large ribosomal subunit protein bL9 (148 aa).

It belongs to the bacterial ribosomal protein bL9 family.

Binds to the 23S rRNA. The chain is Large ribosomal subunit protein bL9 from Bacillus cereus (strain B4264).